A 306-amino-acid polypeptide reads, in one-letter code: Transcription initiation factor IIB 2 (306 aa).

The TFIIB-type zinc finger occupies Pro-6–Glu-37. Zn(2+) is bound by residues Cys-10, Cys-13, Cys-29, and Cys-32. 2 repeat units span residues Ser-123–Leu-206 and Glu-217–Glu-298.

It belongs to the TFIIB family.

Stabilizes TBP binding to an archaeal box-A promoter. Also responsible for recruiting RNA polymerase II to the pre-initiation complex (DNA-TBP-TFIIB). This chain is Transcription initiation factor IIB 2, found in Thermococcus kodakarensis (strain ATCC BAA-918 / JCM 12380 / KOD1) (Pyrococcus kodakaraensis (strain KOD1)).